The chain runs to 250 residues: 1-(5-phosphoribosyl)-5-[(5-phosphoribosylamino)methylideneamino] imidazole-4-carboxamide isomerase (250 aa).

The Proton acceptor role is filled by aspartate 10. Aspartate 131 functions as the Proton donor in the catalytic mechanism.

It belongs to the HisA/HisF family.

It is found in the cytoplasm. It carries out the reaction 1-(5-phospho-beta-D-ribosyl)-5-[(5-phospho-beta-D-ribosylamino)methylideneamino]imidazole-4-carboxamide = 5-[(5-phospho-1-deoxy-D-ribulos-1-ylimino)methylamino]-1-(5-phospho-beta-D-ribosyl)imidazole-4-carboxamide. It functions in the pathway amino-acid biosynthesis; L-histidine biosynthesis; L-histidine from 5-phospho-alpha-D-ribose 1-diphosphate: step 4/9. This is 1-(5-phosphoribosyl)-5-[(5-phosphoribosylamino)methylideneamino] imidazole-4-carboxamide isomerase from Desulfitobacterium hafniense (strain DSM 10664 / DCB-2).